A 260-amino-acid polypeptide reads, in one-letter code: 14-3-3-like protein C (260 aa).

It belongs to the 14-3-3 family.

This Nicotiana tabacum (Common tobacco) protein is 14-3-3-like protein C.